The following is a 357-amino-acid chain: 4-hydroxy-3-methylbut-2-en-1-yl diphosphate synthase (flavodoxin) (357 aa).

Cysteine 264, cysteine 267, cysteine 299, and glutamate 306 together coordinate [4Fe-4S] cluster.

The protein belongs to the IspG family. Requires [4Fe-4S] cluster as cofactor.

The catalysed reaction is (2E)-4-hydroxy-3-methylbut-2-enyl diphosphate + oxidized [flavodoxin] + H2O + 2 H(+) = 2-C-methyl-D-erythritol 2,4-cyclic diphosphate + reduced [flavodoxin]. It functions in the pathway isoprenoid biosynthesis; isopentenyl diphosphate biosynthesis via DXP pathway; isopentenyl diphosphate from 1-deoxy-D-xylulose 5-phosphate: step 5/6. Converts 2C-methyl-D-erythritol 2,4-cyclodiphosphate (ME-2,4cPP) into 1-hydroxy-2-methyl-2-(E)-butenyl 4-diphosphate. The polypeptide is 4-hydroxy-3-methylbut-2-en-1-yl diphosphate synthase (flavodoxin) (Campylobacter jejuni subsp. jejuni serotype O:6 (strain 81116 / NCTC 11828)).